Reading from the N-terminus, the 72-residue chain is Disintegrin cotiarin (72 aa).

Residues 1 to 72 enclose the Disintegrin domain; the sequence is EAGEECDCGA…SADCPRNRFH (72 aa). Cystine bridges form between Cys6–Cys21, Cys8–Cys16, Cys15–Cys38, Cys29–Cys35, Cys34–Cys59, and Cys47–Cys66. A Cell attachment site motif is present at residues 51–53; the sequence is RGD. The tract at residues 51-72 is disordered; the sequence is RGDNPDDRCTGQSADCPRNRFH.

The protein belongs to the venom metalloproteinase (M12B) family. P-II subfamily. P-IIa sub-subfamily. Monomer. Expressed by the venom gland.

The protein resides in the secreted. In terms of biological role, inhibits fibrinogen interaction with platelets. Acts by binding to alpha-IIb/beta-3 (ITGA2B/ITGB3) on the platelet surface and inhibits aggregation induced by ADP, thrombin, platelet-activating factor and collagen. In Bothrops cotiara (Cotiara), this protein is Disintegrin cotiarin.